The sequence spans 850 residues: MKNKDSLHVSRRRFLAQLGGLTVAGMLGPSLLTPRSARAADAVAPGAATKEGILTGSHWGAIRATVVDGRFVAAKPFEQDKYPSKMIAGLPDHVHNAARIRYPMVRVDWMRKGHQSDTSQRGDNRFVRVSWDEALDLFYQELERVQKTYGPSALLTASGWQSTGMFHNASGMLARAIALHGNSVSTGGDYSTGAAQVILPRVVGSMEVYEQQTSWPLVLQNSKTIVLWGSDMVKNQQANWWCPDHDVYQYYEQLKEKVASGAISVISIDPVVTSTHDYLGRDKVKHIAINPQTDVPLQLALAHTLYSEKLYDKNFLDNYCVGFDQFLPYLLGEKDGQPKDAAWAEKLCGIDADTIRALARQMAGDRTQIIAGWCVQRMQHGEQWSWMVVVLAAMLGQIGLPGGGFGFGWHYNGAGTPGRKGIILSGFSGSTTVPPVHDSTDYKGYSSTIPIARFMDAILEPGKIINWNGKSVKLPPLKMCVFAGTNPFHRHQQINRIIEGWRKLETVIAIDNQWTSTCRFADIVLPATTQFERNDLDQFGNHSNRGIIAMKQVVSPQFEARNDFDIFRDLCRRFNREAAFTEGLDEMGWLKRIWQEGSQQGKGRGIHLPIFEVFWNQQEYIEFDHPQMFVRHQAFREDPDLEPLGTPSGLIEIYSKTIADMQYDDCQGHPMWFEKIERSHGGPGSQRWPLHLQSVHPDFRLHSQLCESETLRQQYAVGGKEPVFINPQDASARGIRNGDIVRVFNARGQVLAGAVVSDRYAPGVARIHEGAWYDPDKGGDLNALCKYGNPNVLTLDIGTSQLAQATSAHTTLVEIEKYTGPMDNVTAFNGPVEMVAQCEYVPASQGNPHD.

The tat-type signal signal peptide spans 1-39 (MKNKDSLHVSRRRFLAQLGGLTVAGMLGPSLLTPRSARA). Ser191 is a binding site for Mo-bis(molybdopterin guanine dinucleotide).

The protein belongs to the prokaryotic molybdopterin-containing oxidoreductase family. Mo-bis(molybdopterin guanine dinucleotide) serves as cofactor. Post-translationally, predicted to be exported by the Tat system. The position of the signal peptide cleavage has not been experimentally proven.

It is found in the periplasm. It carries out the reaction trimethylamine + 2 Fe(III)-[cytochrome c] + H2O = trimethylamine N-oxide + 2 Fe(II)-[cytochrome c] + 3 H(+). Functionally, reduces trimethylamine-N-oxide (TMAO) into trimethylamine; an anaerobic reaction coupled to energy-yielding reactions. The sequence is that of Trimethylamine-N-oxide reductase (torA) from Salmonella typhimurium (strain LT2 / SGSC1412 / ATCC 700720).